Here is a 307-residue protein sequence, read N- to C-terminus: Woronin sorting complex protein (307 aa).

A run of 3 helical transmembrane segments spans residues 106-125 (MATY…IWIL), 146-167 (NLIV…IAGA), and 207-227 (AWMP…NYIT). Over residues 241–264 (GDGAHGDHRHDRERERDRERERHS) the composition is skewed to basic and acidic residues. The interval 241-307 (GDGAHGDHRH…YPSLGQNPRY (67 aa)) is disordered. Positions 266–278 (PPHGHGPSHGGRP) are enriched in low complexity.

This sequence belongs to the peroxisomal membrane protein PXMP2/4 family. As to quaternary structure, self-assembles into detergent-resistant oligomers and forms a complex with hex-1 assemblies.

It is found in the peroxisome membrane. It localises to the cell septum. In terms of biological role, woronin sorting complex protein involved in both Woronin bodies (WB) formation and inherence. Localizes to large peroxisome membranes where it self-assembles into detergent-resistant oligomers that envelop hex-1 assemblies, producing asymmetrical nascent WBs. These structures are then delivered to the cell cortex, which permits partitioning of the nascent WB and WB inheritance. This chain is Woronin sorting complex protein, found in Neurospora crassa (strain ATCC 24698 / 74-OR23-1A / CBS 708.71 / DSM 1257 / FGSC 987).